Here is a 518-residue protein sequence, read N- to C-terminus: Probable pectinesterase/pectinesterase inhibitor 16 (518 aa).

An N-terminal signal peptide occupies residues 1–33 (MASSSSISNHKIPNTLMFLVIVNFLYLIQTNSA). The segment at 30–172 (TNSAVSISSN…TGLLTSSLDL (143 aa)) is pectinesterase inhibitor 16. N-linked (GlcNAc...) asparagine glycans are attached at residues N82 and N161. The pectinesterase 16 stretch occupies residues 213–502 (DAVVAPDGSG…FTVASFIDGN (290 aa)). Positions 289 and 319 each coordinate substrate. The Proton donor; for pectinesterase activity role is filled by D342. D363 functions as the Nucleophile; for pectinesterase activity in the catalytic mechanism. R422 and W424 together coordinate substrate.

In the N-terminal section; belongs to the PMEI family. This sequence in the C-terminal section; belongs to the pectinesterase family. Expressed in siliques and floral stems.

Its subcellular location is the secreted. The protein localises to the cell wall. The catalysed reaction is [(1-&gt;4)-alpha-D-galacturonosyl methyl ester](n) + n H2O = [(1-&gt;4)-alpha-D-galacturonosyl](n) + n methanol + n H(+). The protein operates within glycan metabolism; pectin degradation; 2-dehydro-3-deoxy-D-gluconate from pectin: step 1/5. Functionally, acts in the modification of cell walls via demethylesterification of cell wall pectin. In Arabidopsis thaliana (Mouse-ear cress), this protein is Probable pectinesterase/pectinesterase inhibitor 16 (PME16).